The sequence spans 171 residues: 3-hydroxydecanoyl-[acyl-carrier-protein] dehydratase (171 aa).

H70 is a catalytic residue.

The protein belongs to the thioester dehydratase family. FabA subfamily. Homodimer.

The protein resides in the cytoplasm. It carries out the reaction a (3R)-hydroxyacyl-[ACP] = a (2E)-enoyl-[ACP] + H2O. The enzyme catalyses (3R)-hydroxydecanoyl-[ACP] = (2E)-decenoyl-[ACP] + H2O. The catalysed reaction is (2E)-decenoyl-[ACP] = (3Z)-decenoyl-[ACP]. Its pathway is lipid metabolism; fatty acid biosynthesis. Necessary for the introduction of cis unsaturation into fatty acids. Catalyzes the dehydration of (3R)-3-hydroxydecanoyl-ACP to E-(2)-decenoyl-ACP and then its isomerization to Z-(3)-decenoyl-ACP. Can catalyze the dehydratase reaction for beta-hydroxyacyl-ACPs with saturated chain lengths up to 16:0, being most active on intermediate chain length. The chain is 3-hydroxydecanoyl-[acyl-carrier-protein] dehydratase from Pseudomonas fluorescens (strain ATCC BAA-477 / NRRL B-23932 / Pf-5).